The chain runs to 318 residues: CRISPR-associated endonuclease Cas1 1 (318 aa).

Mn(2+)-binding residues include Glu157, His222, and Glu237.

It belongs to the CRISPR-associated endonuclease Cas1 family. As to quaternary structure, homodimer, forms a heterotetramer with a Cas2 homodimer. The cofactor is Mg(2+). Mn(2+) serves as cofactor.

Functionally, CRISPR (clustered regularly interspaced short palindromic repeat), is an adaptive immune system that provides protection against mobile genetic elements (viruses, transposable elements and conjugative plasmids). CRISPR clusters contain spacers, sequences complementary to antecedent mobile elements, and target invading nucleic acids. CRISPR clusters are transcribed and processed into CRISPR RNA (crRNA). Acts as a dsDNA endonuclease. Involved in the integration of spacer DNA into the CRISPR cassette. This Francisella tularensis subsp. novicida (strain U112) protein is CRISPR-associated endonuclease Cas1 1.